The following is a 407-amino-acid chain: Substance-P receptor (407 aa).

Residues 1-20 (MDNVLPVDSDLFPNTSTNTS) form a disordered region. Over 1–31 (MDNVLPVDSDLFPNTSTNTSESNQFVQPTWQ) the chain is Extracellular. 2 N-linked (GlcNAc...) asparagine glycosylation sites follow: N14 and N18. Residues 32 to 54 (IVLWAAAYTVIVVTSVVGNVVVI) form a helical membrane-spanning segment. Over 55 to 64 (WIILAHKRMR) the chain is Cytoplasmic. A helical membrane pass occupies residues 65–86 (TVTNYFLVNLAFAEACMAAFNT). The Extracellular portion of the chain corresponds to 87-106 (VVNFTYAVHNVWYYGLFYCK). C105 and C180 are oxidised to a cystine. The helical transmembrane segment at 107-128 (FHNFFPIAALFASIYSMTAVAF) threads the bilayer. Over 129 to 148 (DRYMAIIHPLQPRLSATATK) the chain is Cytoplasmic. A helical transmembrane segment spans residues 149–169 (VVIFVIWVLALLLAFPQGYYS). Topologically, residues 170–194 (TTETMPSRVVCMIEWPEHPNRTYEK) are extracellular. A helical transmembrane segment spans residues 195-219 (AYHICVTVLIYFLPLLVIGYAYTVV). Residues 220-248 (GITLWASEIPGDSSDRYHEQVSAKRKVVK) lie on the Cytoplasmic side of the membrane. A helical membrane pass occupies residues 249–270 (MMIVVVCTFAICWLPFHIFFLL). Residues 271-283 (PYINPDLYLKKFI) are Extracellular-facing. Residues 284–308 (QQVYLASMWLAMSSTMYNPIIYCCL) traverse the membrane as a helical segment. Topologically, residues 309-407 (NDRFRLGFKH…SSSFYSNMLA (99 aa)) are cytoplasmic. C322 is lipidated: S-palmitoyl cysteine. Residues 362–407 (VGAHEDEPEEGPKATPSSLDLTSNGSSRSNSKTMTESSSFYSNMLA) form a disordered region. Over residues 376–407 (TPSSLDLTSNGSSRSNSKTMTESSSFYSNMLA) the composition is skewed to polar residues.

Belongs to the G-protein coupled receptor 1 family. As to quaternary structure, interacts with ARRB1.

It localises to the cell membrane. In terms of biological role, this is a receptor for the tachykinin neuropeptide substance P. It is probably associated with G proteins that activate a phosphatidylinositol-calcium second messenger system. The rank order of affinity of this receptor to tachykinins is: substance P &gt; substance K &gt; neuromedin K. This Mus musculus (Mouse) protein is Substance-P receptor (Tacr1).